A 207-amino-acid polypeptide reads, in one-letter code: Guanylate kinase (207 aa).

One can recognise a Guanylate kinase-like domain in the interval 5-184 (GNLFIVSAPS…ALADLKSIIF (180 aa)). 12-19 (APSGAGKS) lines the ATP pocket.

Belongs to the guanylate kinase family.

It is found in the cytoplasm. It carries out the reaction GMP + ATP = GDP + ADP. Essential for recycling GMP and indirectly, cGMP. The polypeptide is Guanylate kinase (Shewanella denitrificans (strain OS217 / ATCC BAA-1090 / DSM 15013)).